The chain runs to 164 residues: Cytochrome c-type biogenesis protein CcmE (164 aa).

The Cytoplasmic portion of the chain corresponds to 1–8 (MNPRRKSR). The chain crosses the membrane as a helical; Signal-anchor for type II membrane protein span at residues 9 to 29 (LYLAMVVLIGISLTTTLVLYA). The Periplasmic portion of the chain corresponds to 30 to 164 (LRSNIDLFYT…RGTNTTGNAL (135 aa)). Heme contacts are provided by H130 and Y134. Positions 140 to 164 (EEAMKENHSRPAAAYRGTNTTGNAL) are disordered.

Belongs to the CcmE/CycJ family.

Its subcellular location is the cell inner membrane. Functionally, heme chaperone required for the biogenesis of c-type cytochromes. Transiently binds heme delivered by CcmC and transfers the heme to apo-cytochromes in a process facilitated by CcmF and CcmH. This is Cytochrome c-type biogenesis protein CcmE from Yersinia pseudotuberculosis serotype O:3 (strain YPIII).